Reading from the N-terminus, the 973-residue chain is EF-hand calcium-binding domain-containing protein 13 (973 aa).

The interval 384-448 (YSKNGINFKK…HSSLQKQVSS (65 aa)) is disordered. Residues 396–405 (EKGEIHDSKS) show a composition bias toward basic and acidic residues. Residues 406–418 (KPQSLKSSTSLSK) show a composition bias toward low complexity. 6 EF-hand domains span residues 488–523 (LLDEEFQKIVTDTSRNENGMVELDDFVNALAKERSF), 524–559 (PECNALPGVIKAIDKIKDKNVDYEDLNTCLQNFGIY), 633–668 (LKKDEFLAALELVTVDEGDKVQFEEFAKVVRNMRDA), 756–791 (PKVNEIKEAANILSHVDNGKIGIPDLEHALKCLNVN), 792–827 (LTEEDFNEALNCCNVSDNMEVDLKDFLMKMKESPHF), and 864–899 (TANAILTVMLRHVPEHESGKVSIQEFMTKLSDILTI).

The protein is EF-hand calcium-binding domain-containing protein 13 (EFCAB13) of Homo sapiens (Human).